The primary structure comprises 190 residues: Glutamyl-tRNA(Gln) amidotransferase subunit F, mitochondrial (190 aa).

Belongs to the GatF family. In terms of assembly, subunit of the heterotrimeric GatFAB amidotransferase (AdT) complex, composed of A, B and F subunits.

It localises to the mitochondrion inner membrane. The catalysed reaction is L-glutamyl-tRNA(Gln) + L-glutamine + ATP + H2O = L-glutaminyl-tRNA(Gln) + L-glutamate + ADP + phosphate + H(+). Functionally, allows the formation of correctly charged Gln-tRNA(Gln) through the transamidation of misacylated Glu-tRNA(Gln) in the mitochondria. The reaction takes place in the presence of glutamine and ATP through an activated gamma-phospho-Glu-tRNA(Gln). Required for proper protein synthesis within the mitochondrion. This Eremothecium gossypii (strain ATCC 10895 / CBS 109.51 / FGSC 9923 / NRRL Y-1056) (Yeast) protein is Glutamyl-tRNA(Gln) amidotransferase subunit F, mitochondrial.